Here is a 137-residue protein sequence, read N- to C-terminus: Glycine cleavage system H protein (137 aa).

A Lipoyl-binding domain is found at 36–118 (PAIIGITEYA…YGEGWLLKVE (83 aa)). Position 77 is an N6-lipoyllysine (lysine 77).

Belongs to the GcvH family. As to quaternary structure, the glycine cleavage system is composed of four proteins: P, T, L and H. Requires (R)-lipoate as cofactor.

Its function is as follows. The glycine cleavage system catalyzes the degradation of glycine. The H protein shuttles the methylamine group of glycine from the P protein to the T protein. The chain is Glycine cleavage system H protein from Bifidobacterium longum (strain NCC 2705).